The primary structure comprises 608 residues: MCGICGIVGHQPASPIAFEALRRLEYRGYDSAGIATLTASGDIERRRAAGKLDNLEHVLKEHPLPGTTGIGHTRWATHGAPTENNAHPHEAGRVAIVHNGIIENFAELKKELEAKGRVFRTETDSETVAHLVDDYLGQGLEPREAAFAAIKRLEGAYAIAMIFKDHEGLLIGARHGAPLAVGYGNGEMFLGSDSIALAPMARKMTYLEDGDWCELTPDHVTIFDMTGAEVSRPVQDLTFMAGQVGKDGYRHYMEKELHEHPVAIGQTLKRITDPASKRIALPEMPFDPAQVPRITITACGSAYYAGMVGRYWLESLARIPVEIDVASEMRYREPPQPDKGVALLISQSGETADTLGVLRSLKKAGQSIVSVLNVEHSTMGRESDLVLGMDAGPEISVASTKAFTAQLSVLAALAIDFARARGTMDQAREERLTASLLDLPSRAAEVFTRTKDIQAMAAVVAQARDVLYLGRGICTPIAFEGALKLKEISYIHAEAYAAGELKHGPISLIDQTVPVVAIAPSTILFDKTLSNLQEAKARGGRILAFTDAEGAKRLEGVAEQVVIMPDVDAFVAPILYAIPVQMLAYEVALLKGTDVDQPRNLAKSVTVE.

Cys2 acts as the Nucleophile; for GATase activity in catalysis. The Glutamine amidotransferase type-2 domain occupies 2–218 (CGICGIVGHQ…DGDWCELTPD (217 aa)). SIS domains are found at residues 284-423 (MPFD…ARGT) and 456-598 (MAAV…VDQP). Residue Lys603 is the For Fru-6P isomerization activity of the active site.

In terms of assembly, homodimer.

It localises to the cytoplasm. It catalyses the reaction D-fructose 6-phosphate + L-glutamine = D-glucosamine 6-phosphate + L-glutamate. Catalyzes the first step in hexosamine metabolism, converting fructose-6P into glucosamine-6P using glutamine as a nitrogen source. In Gluconobacter oxydans (strain 621H) (Gluconobacter suboxydans), this protein is Glutamine--fructose-6-phosphate aminotransferase [isomerizing].